The chain runs to 110 residues: Neural hemoglobin (110 aa).

The region spanning valine 2 to leucine 110 is the Globin domain. Histidine 70 provides a ligand contact to heme.

The protein belongs to the globin family. In terms of assembly, homotetramer. Self-associates in the deoxy state. Seems to dissociate upon oxygenation.

Functionally, acts as an oxygen store capable of sustaining neuronal activity in an anoxic environment for 5 to 30 minutes. This is Neural hemoglobin from Cerebratulus lacteus (Milky ribbon worm).